The following is a 346-amino-acid chain: Holliday junction branch migration complex subunit RuvB (346 aa).

A large ATPase domain (RuvB-L) region spans residues 1–181 (MSDRNPLIDA…FGIPVRLNFY (181 aa)). Residues Leu-20, Arg-21, Gly-62, Lys-65, Thr-66, Thr-67, 128–130 (EDF), Arg-171, Tyr-181, and Arg-218 contribute to the ATP site. Residue Thr-66 coordinates Mg(2+). The segment at 182–252 (TVEELEYIVR…IADEALSRLE (71 aa)) is small ATPAse domain (RuvB-S). Positions 255–346 (NRGLDQLDRR…SQYGLFMEDE (92 aa)) are head domain (RuvB-H). Residues Arg-291, Arg-310, and Arg-315 each contribute to the DNA site.

It belongs to the RuvB family. Homohexamer. Forms an RuvA(8)-RuvB(12)-Holliday junction (HJ) complex. HJ DNA is sandwiched between 2 RuvA tetramers; dsDNA enters through RuvA and exits via RuvB. An RuvB hexamer assembles on each DNA strand where it exits the tetramer. Each RuvB hexamer is contacted by two RuvA subunits (via domain III) on 2 adjacent RuvB subunits; this complex drives branch migration. In the full resolvosome a probable DNA-RuvA(4)-RuvB(12)-RuvC(2) complex forms which resolves the HJ.

It is found in the cytoplasm. The enzyme catalyses ATP + H2O = ADP + phosphate + H(+). In terms of biological role, the RuvA-RuvB-RuvC complex processes Holliday junction (HJ) DNA during genetic recombination and DNA repair, while the RuvA-RuvB complex plays an important role in the rescue of blocked DNA replication forks via replication fork reversal (RFR). RuvA specifically binds to HJ cruciform DNA, conferring on it an open structure. The RuvB hexamer acts as an ATP-dependent pump, pulling dsDNA into and through the RuvAB complex. RuvB forms 2 homohexamers on either side of HJ DNA bound by 1 or 2 RuvA tetramers; 4 subunits per hexamer contact DNA at a time. Coordinated motions by a converter formed by DNA-disengaged RuvB subunits stimulates ATP hydrolysis and nucleotide exchange. Immobilization of the converter enables RuvB to convert the ATP-contained energy into a lever motion, pulling 2 nucleotides of DNA out of the RuvA tetramer per ATP hydrolyzed, thus driving DNA branch migration. The RuvB motors rotate together with the DNA substrate, which together with the progressing nucleotide cycle form the mechanistic basis for DNA recombination by continuous HJ branch migration. Branch migration allows RuvC to scan DNA until it finds its consensus sequence, where it cleaves and resolves cruciform DNA. This is Holliday junction branch migration complex subunit RuvB from Brucella suis (strain ATCC 23445 / NCTC 10510).